Consider the following 98-residue polypeptide: Large ribosomal subunit protein eL30 (98 aa).

The protein belongs to the eukaryotic ribosomal protein eL30 family.

The protein is Large ribosomal subunit protein eL30 (rpl30e) of Methanothermobacter thermautotrophicus (strain ATCC 29096 / DSM 1053 / JCM 10044 / NBRC 100330 / Delta H) (Methanobacterium thermoautotrophicum).